The sequence spans 104 residues: Protein SMALL AUXIN UP-REGULATED RNA 12 (104 aa).

Belongs to the ARG7 family. Expressed in flowers and etiolated hypocotyls.

It is found in the cell membrane. Provide a mechanistic link between auxin and plasma membrane H(+)-ATPases (PM H(+)-ATPases, e.g. AHA1 and AHA2), and triggers PM H(+)-ATPases activity by promoting phosphorylation of their C-terminal autoinhibitory domain as a result of PP2C-D subfamily of type 2C phosphatases inhibition, thus leading to the acidification of the apoplast and the facilitation of solutes and water uptake to drive cell expansion. Triggers plant growth probably by promoting cell elongation. Regulates branch angles and bending. The protein is Protein SMALL AUXIN UP-REGULATED RNA 12 of Arabidopsis thaliana (Mouse-ear cress).